The sequence spans 311 residues: Pyrimidine-specific ribonucleoside hydrolase RihA (311 aa).

Residue His240 is part of the active site.

The protein belongs to the IUNH family. RihA subfamily.

Its function is as follows. Hydrolyzes with equal efficiency cytidine or uridine to ribose and cytosine or uracil, respectively. The sequence is that of Pyrimidine-specific ribonucleoside hydrolase RihA from Escherichia coli O17:K52:H18 (strain UMN026 / ExPEC).